A 411-amino-acid chain; its full sequence is Bifunctional protein GlmU (411 aa).

Residues 1-204 form a pyrophosphorylase region; the sequence is MDAIILCAGK…NGKLHGIELN (204 aa). UTP is bound by residues 6 to 9, glutamine 74, and glycine 79; that span reads LCAG. Residues threonine 80, glycine 130, asparagine 142, and asparagine 158 each contribute to the N-acetyl-alpha-D-glucosamine 1-phosphate site. The interval 205–224 is linker; sequence GYWNDIGHPWDVLSANNRFL. Residues 225-411 are N-acetyltransferase; it reads NKIISKVSGK…DELVITKKRN (187 aa). Histidine 308 serves as the catalytic Proton acceptor. Acetyl-CoA-binding residues include alanine 384 and lysine 401.

It in the N-terminal section; belongs to the N-acetylglucosamine-1-phosphate uridyltransferase family. In the C-terminal section; belongs to the transferase hexapeptide repeat family.

It carries out the reaction N-acetyl-alpha-D-glucosamine 1-phosphate + UTP + H(+) = UDP-N-acetyl-alpha-D-glucosamine + diphosphate. The catalysed reaction is alpha-D-glucosamine 1-phosphate + acetyl-CoA = N-acetyl-alpha-D-glucosamine 1-phosphate + CoA + H(+). It functions in the pathway nucleotide-sugar biosynthesis; UDP-N-acetyl-alpha-D-glucosamine biosynthesis; N-acetyl-alpha-D-glucosamine 1-phosphate from alpha-D-glucosamine 6-phosphate (route II): step 2/2. Its pathway is nucleotide-sugar biosynthesis; UDP-N-acetyl-alpha-D-glucosamine biosynthesis; UDP-N-acetyl-alpha-D-glucosamine from N-acetyl-alpha-D-glucosamine 1-phosphate: step 1/1. Catalyzes the last two sequential reactions in the de novo biosynthetic pathway for UDP-N-acetyl-glucosamine (UDP-GlcNAc). Responsible for the acetylation of GlcN-1-P to GlcNAc-1-P, and for the uridyl transfer from UTP to GlcNAc-1-P, to produce UDP-GlcNAc and pyrophosphate. This is Bifunctional protein GlmU from Methanococcus maripaludis (strain C7 / ATCC BAA-1331).